Consider the following 114-residue polypeptide: T cell receptor beta variable 5-4 (114 aa).

Residues 1–21 form the signal peptide; it reads MGPGLLCWALLCLLGAGSVET. An Ig-like domain is found at 22 to 114; sequence GVTQSPTHLI…SALYLCASSL (93 aa). Cysteines 42 and 110 form a disulfide. N-linked (GlcNAc...) asparagine glycosylation is present at asparagine 90.

In terms of assembly, alpha-beta TR is a heterodimer composed of an alpha and beta chain; disulfide-linked. The alpha-beta TR is associated with the transmembrane signaling CD3 coreceptor proteins to form the TR-CD3 (TcR or TCR). The assembly of alpha-beta TR heterodimers with CD3 occurs in the endoplasmic reticulum where a single alpha-beta TR heterodimer associates with one CD3D-CD3E heterodimer, one CD3G-CD3E heterodimer and one CD247 homodimer forming a stable octameric structure. CD3D-CD3E and CD3G-CD3E heterodimers preferentially associate with TR alpha and TR beta chains, respectively. The association of the CD247 homodimer is the last step of TcR assembly in the endoplasmic reticulum and is required for transport to the cell surface.

Its subcellular location is the cell membrane. Its function is as follows. V region of the variable domain of T cell receptor (TR) beta chain that participates in the antigen recognition. Alpha-beta T cell receptors are antigen specific receptors which are essential to the immune response and are present on the cell surface of T lymphocytes. Recognize peptide-major histocompatibility (MH) (pMH) complexes that are displayed by antigen presenting cells (APC), a prerequisite for efficient T cell adaptive immunity against pathogens. Binding of alpha-beta TR to pMH complex initiates TR-CD3 clustering on the cell surface and intracellular activation of LCK that phosphorylates the ITAM motifs of CD3G, CD3D, CD3E and CD247 enabling the recruitment of ZAP70. In turn ZAP70 phosphorylates LAT, which recruits numerous signaling molecules to form the LAT signalosome. The LAT signalosome propagates signal branching to three major signaling pathways, the calcium, the mitogen-activated protein kinase (MAPK) kinase and the nuclear factor NF-kappa-B (NF-kB) pathways, leading to the mobilization of transcription factors that are critical for gene expression and essential for T cell growth and differentiation. The T cell repertoire is generated in the thymus, by V-(D)-J rearrangement. This repertoire is then shaped by intrathymic selection events to generate a peripheral T cell pool of self-MH restricted, non-autoaggressive T cells. Post-thymic interaction of alpha-beta TR with the pMH complexes shapes TR structural and functional avidity. This Homo sapiens (Human) protein is T cell receptor beta variable 5-4.